The chain runs to 438 residues: Gamma-glutamyl phosphate reductase (438 aa).

Belongs to the gamma-glutamyl phosphate reductase family.

The protein localises to the cytoplasm. The enzyme catalyses L-glutamate 5-semialdehyde + phosphate + NADP(+) = L-glutamyl 5-phosphate + NADPH + H(+). Its pathway is amino-acid biosynthesis; L-proline biosynthesis; L-glutamate 5-semialdehyde from L-glutamate: step 2/2. Its function is as follows. Catalyzes the NADPH-dependent reduction of L-glutamate 5-phosphate into L-glutamate 5-semialdehyde and phosphate. The product spontaneously undergoes cyclization to form 1-pyrroline-5-carboxylate. In Prochlorococcus marinus (strain NATL2A), this protein is Gamma-glutamyl phosphate reductase.